The chain runs to 211 residues: MANSNTNQLHPLGATTSQTFTTALNHTAASTIAINFRELIKEPKELDEASNYLYQALLDDVVAGIFIETHHLRKTGNLAALDGVGEENLESAFHICEMPNLDIFGISTAKKQMDCTCPNCDRLVAAARFAPHLEKCMGMGRISSRIASRRLATKEGSSASTSSTSTYLQSGGNTGGTDDEDDVDWSSDKRKKKSTQSSRNNGSKKNNGKTF.

Residues cysteine 115–cysteine 136 form an SGF11-type zinc finger. The disordered stretch occupies residues arginine 149–phenylalanine 211. The segment covering serine 157–threonine 166 has biased composition (low complexity). Serine 187 bears the Phosphoserine mark. Low complexity predominate over residues serine 197 to phenylalanine 211.

This sequence belongs to the SGF11 family. In terms of assembly, component of some SAGA transcription coactivator-HAT complexes, at least composed of Ada2b, not/nonstop, Pcaf/Gcn5, Sgf11 and Spt3. Within the SAGA complex, Sgf11, e(y)2, and not/nonstop form an additional subcomplex of SAGA called the DUB module (deubiquitination module). Interacts directly with not/nonstop. Interacts with the AMEX complex component xmas-2. Interacts with Cbp80; important for promoter recruitment of Sgf11 that is not associated with the DUB module.

It localises to the nucleus. The protein resides in the nucleoplasm. The protein localises to the cytoplasm. In terms of biological role, component of the transcription regulatory histone acetylation (HAT) complex SAGA, a multiprotein complex that activates transcription by remodeling chromatin and mediating histone acetylation and deubiquitination. Within the SAGA complex, participates in a subcomplex that specifically deubiquitinates histone H2B. The SAGA complex is recruited to specific gene promoters by activators, where it is required for transcription. Required for nuclear receptor-mediated transactivation. Binds independently on SAGA to promoters in an RNA-dependent manner. Binds to mRNA and is essential for total mRNA export from the nucleus. Required to counteract heterochromatin silencing. Controls the development of neuronal connectivity in visual system by being required for accurate axon targeting in the optic lobe. Required for expression of ecdysone-induced genes such as br/broad. The polypeptide is SAGA-associated factor 11 homolog 1 (Drosophila grimshawi (Hawaiian fruit fly)).